Consider the following 272-residue polypeptide: Alcohol dehydrogenase-related 31 kDa protein (272 aa).

An NAD(+)-binding site is contributed by 11–34 (YVADCGGIALETSKVLMTKNIAKL). Ser139 contributes to the substrate binding site. Residue Tyr152 is the Proton acceptor of the active site.

Belongs to the short-chain dehydrogenases/reductases (SDR) family.

The protein is Alcohol dehydrogenase-related 31 kDa protein (Adhr) of Drosophila teissieri (Fruit fly).